The chain runs to 141 residues: Hemoglobin subunit alpha-D (141 aa).

The Globin domain occupies 1–141 (MLGAEETALV…VAAVLAEKYR (141 aa)). Heme b contacts are provided by His-58 and His-87.

It belongs to the globin family. Heterotetramer of two alpha-D chains and two beta chains. As to expression, red blood cells.

In terms of biological role, involved in oxygen transport from the lung to the various peripheral tissues. This is Hemoglobin subunit alpha-D (HBAD) from Phalacrocorax carbo (Great cormorant).